The following is a 718-amino-acid chain: Ophiobolin F synthase oblA (718 aa).

A (7Z)-ophiobola-7,19-dien-3-ol synthase region spans residues 1–320 (MACKYSTLID…RYNGPTKFNE (320 aa)). Mg(2+) contacts are provided by Asp-93 and Asp-97. Asp-93 is a substrate binding site. Positions 93 to 97 (DDVID) match the DDXXD 1 motif. Residues 180–183 (RALD), Asn-224, 228–232 (SFEKE), and 311–312 (RY) contribute to the substrate site. Positions 224-232 (NDLFSFEKE) match the NSE/DTE motif. Residues 321–718 (LQLLRSEHGL…LRVMLELLKV (398 aa)) form a geranylfarnesyl diphosphate synthase region. Positions 346–391 (LVEGDCHESKPNELKRKRNGVSVDDEMRTNGTNGAKKPAHVSQPST) are disordered. The segment covering 349–359 (GDCHESKPNEL) has biased composition (basic and acidic residues). Isopentenyl diphosphate is bound by residues Lys-429, Arg-432, and His-461. Mg(2+)-binding residues include Asp-468 and Asp-472. The DDXXD 2 signature appears at 468–472 (DDLED). Residue Arg-477 participates in dimethylallyl diphosphate binding. Residue Arg-478 coordinates isopentenyl diphosphate. 6 residues coordinate dimethylallyl diphosphate: Lys-555, Thr-556, Gln-594, Asn-601, Lys-611, and Lys-621.

The protein in the N-terminal section; belongs to the terpene synthase family. In the C-terminal section; belongs to the FPP/GGPP synthase family. Requires Mg(2+) as cofactor.

It carries out the reaction isopentenyl diphosphate + (2E,6E)-farnesyl diphosphate = (2E,6E,10E)-geranylgeranyl diphosphate + diphosphate. It catalyses the reaction isopentenyl diphosphate + (2E,6E,10E)-geranylgeranyl diphosphate = (2E,6E,10E,14E)-geranylfarnesyl diphosphate + diphosphate. The catalysed reaction is (2E,6E,10E,14E)-geranylfarnesyl diphosphate + H2O = ophiobolin F + diphosphate. It participates in secondary metabolite biosynthesis; terpenoid biosynthesis. Bifunctional sesterterpene synthase; part of the gene cluster that mediates the biosynthesis of the sesterterpenes ophiobolins, fungal phytotoxins with potential anti-cancer activities. The first step of the pathway is performed by the sesterterpene synthase oblA that possesses both prenyl transferase and terpene cyclase activity, converting isopentenyl diphosphate and dimethylallyl diphosphate into geranylfarnesyl diphosphate (GFPP) and further converting GFPP into ophiobolin F, respectively. Other sesterterpenoids (C(25) terpenoids) are found as minor products of oblA. It is expected that ophiobolin F is then oxidized to ophiobolin A via ophiobolin C and ophiobolin B intermediates by the combined action of the cytochrome P450 monooxygenase oblB and the FAD-dependent oxidoreductase oblC. Although oblB catalyzes multistep oxygenations at C5 and C21/C7 in a relatively efficient manner, it is unable to convert ophiobolin F to ophiobolin C and produces instead several unexpected derivatives. The chain is Ophiobolin F synthase oblA from Aspergillus clavatus (strain ATCC 1007 / CBS 513.65 / DSM 816 / NCTC 3887 / NRRL 1 / QM 1276 / 107).